The following is a 123-amino-acid chain: Keratin-associated protein 2-2 (123 aa).

The interval cysteine 5–threonine 112 is 11 X 5 AA repeats of C-C-[CDPQRWG]-[APRS]-[CIPSTVD].

Belongs to the KRTAP type 2 family. In terms of assembly, interacts with hair keratins.

In the hair cortex, hair keratin intermediate filaments are embedded in an interfilamentous matrix, consisting of hair keratin-associated proteins (KRTAP), which are essential for the formation of a rigid and resistant hair shaft through their extensive disulfide bond cross-linking with abundant cysteine residues of hair keratins. The matrix proteins include the high-sulfur and high-glycine-tyrosine keratins. The sequence is that of Keratin-associated protein 2-2 (KRTAP2-2) from Homo sapiens (Human).